The chain runs to 283 residues: Myeloid differentiation primary response protein MyD88-B (283 aa).

The region spanning 27-105 is the Death domain; sequence RLCLYLNPNA…DILTDLAPLI (79 aa). The tract at residues 106–143 is intermediate domain; it reads EADCKKYLEKKHGPLPLQDDNVDSSEQYRITKSDDPYG. One can recognise a TIR domain in the interval 147–281; it reads ETFDAFICCC…WFWDKLAKAL (135 aa).

It localises to the cytoplasm. Its function is as follows. Adapter protein involved in the Toll-like receptor and IL-1 receptor signaling pathway in the innate immune response. Activates expression of target genes in the Spemann organizer region during early embryonic development. Is required for normal axis formation. In Xenopus laevis (African clawed frog), this protein is Myeloid differentiation primary response protein MyD88-B (myd88-b).